Reading from the N-terminus, the 501-residue chain is 5-beta-cholestane-3-alpha,7-alpha-diol 12-alpha-hydroxylase (501 aa).

A helical membrane pass occupies residues 1–21 (MVLWGPVLGVLLVAIVGYLCL). Ser-326 carries the post-translational modification Phosphoserine. Cys-440 is a binding site for heme.

The protein belongs to the cytochrome P450 family. Requires heme as cofactor.

The protein localises to the endoplasmic reticulum membrane. The protein resides in the microsome membrane. It catalyses the reaction 7alpha-hydroxycholest-4-en-3-one + reduced [NADPH--hemoprotein reductase] + O2 = 7alpha,12alpha-dihydroxycholest-4-en-3-one + oxidized [NADPH--hemoprotein reductase] + H2O + H(+). The catalysed reaction is 5beta-cholestane-3alpha,7alpha-diol + reduced [NADPH--hemoprotein reductase] + O2 = 5beta-cholestane-3alpha,7alpha,12alpha-triol + oxidized [NADPH--hemoprotein reductase] + H2O + H(+). The enzyme catalyses chenodeoxycholate + reduced [NADPH--hemoprotein reductase] + O2 = cholate + oxidized [NADPH--hemoprotein reductase] + H2O + H(+). Its pathway is lipid metabolism; bile acid biosynthesis. A cytochrome P450 monooxygenase involved in primary bile acid biosynthesis. Catalyzes the 12alpha-hydroxylation of 7alpha-hydroxy-4-cholesten-3-one, an intermediate metabolite in cholic acid biosynthesis. Controls biliary balance of cholic acid and chenodeoxycholic acid, ultimately regulating the intestinal absorption of dietary lipids. Mechanistically, uses molecular oxygen inserting one oxygen atom into a substrate, and reducing the second into a water molecule, with two electrons provided by NADPH via cytochrome P450 reductase (CPR; NADPH--hemoprotein reductase). The protein is 5-beta-cholestane-3-alpha,7-alpha-diol 12-alpha-hydroxylase (CYP8B1) of Sus scrofa (Pig).